The following is a 270-amino-acid chain: Putative phosphoenolpyruvate synthase regulatory protein (270 aa).

150–157 (GVSRCGKT) contacts ADP.

Belongs to the pyruvate, phosphate/water dikinase regulatory protein family. PSRP subfamily.

The catalysed reaction is [pyruvate, water dikinase] + ADP = [pyruvate, water dikinase]-phosphate + AMP + H(+). It catalyses the reaction [pyruvate, water dikinase]-phosphate + phosphate + H(+) = [pyruvate, water dikinase] + diphosphate. Functionally, bifunctional serine/threonine kinase and phosphorylase involved in the regulation of the phosphoenolpyruvate synthase (PEPS) by catalyzing its phosphorylation/dephosphorylation. The polypeptide is Putative phosphoenolpyruvate synthase regulatory protein (Shewanella amazonensis (strain ATCC BAA-1098 / SB2B)).